We begin with the raw amino-acid sequence, 344 residues long: DNA-directed RNA polymerase subunit alpha (344 aa).

The interval 1 to 246 is alpha N-terminal domain (alpha-NTD); sequence MLVEKFLKDF…EFLFPLVDFE (246 aa). The interval 259 to 344 is alpha C-terminal domain (alpha-CTD); that stretch reads ESSNLLDMSI…VLSKNVKISE (86 aa).

The protein belongs to the RNA polymerase alpha chain family. Homodimer. The RNAP catalytic core consists of 2 alpha, 1 beta, 1 beta' and 1 omega subunit. When a sigma factor is associated with the core the holoenzyme is formed, which can initiate transcription.

The enzyme catalyses RNA(n) + a ribonucleoside 5'-triphosphate = RNA(n+1) + diphosphate. DNA-dependent RNA polymerase catalyzes the transcription of DNA into RNA using the four ribonucleoside triphosphates as substrates. This Borreliella burgdorferi (strain ATCC 35210 / DSM 4680 / CIP 102532 / B31) (Borrelia burgdorferi) protein is DNA-directed RNA polymerase subunit alpha.